We begin with the raw amino-acid sequence, 88 residues long: Snakin-1 (88 aa).

Residues 1 to 25 form the signal peptide; the sequence is MKLFLLTLLLVTLVITPSLIQTTMA.

Belongs to the GASA family. Six disulfide bonds may be present. Expressed in tubers, stems, axillary and young floral buds, sepals, petals, stamens and carpels, but not in roots, stolons, shoot apex meristem or young leaves.

The protein resides in the secreted. It localises to the cell wall. Has an antimicrobial activity. Causes a rapid aggregation of both Gram-positive and Gram-negative bacteria, but the antimicrobial activity is not correlated with the capacity to aggregate bacteria. The chain is Snakin-1 (SN1) from Solanum tuberosum (Potato).